The primary structure comprises 395 residues: 8-amino-7-oxononanoate synthase (395 aa).

Substrate is bound at residue R24. Pyridoxal 5'-phosphate is bound at residue 111–112; the sequence is GF. H136 is a binding site for substrate. Residues S184, 209-212, and 240-243 each bind pyridoxal 5'-phosphate; these read DDAH and TLSK. K243 bears the N6-(pyridoxal phosphate)lysine mark. A substrate-binding site is contributed by T357.

Belongs to the class-II pyridoxal-phosphate-dependent aminotransferase family. BioF subfamily. In terms of assembly, homodimer. Pyridoxal 5'-phosphate serves as cofactor.

The enzyme catalyses 6-carboxyhexanoyl-[ACP] + L-alanine + H(+) = (8S)-8-amino-7-oxononanoate + holo-[ACP] + CO2. It functions in the pathway cofactor biosynthesis; biotin biosynthesis. Functionally, catalyzes the decarboxylative condensation of pimeloyl-[acyl-carrier protein] and L-alanine to produce 8-amino-7-oxononanoate (AON), [acyl-carrier protein], and carbon dioxide. The sequence is that of 8-amino-7-oxononanoate synthase from Thermoanaerobacter pseudethanolicus (strain ATCC 33223 / 39E) (Clostridium thermohydrosulfuricum).